The primary structure comprises 299 residues: UDP-N-acetylenolpyruvoylglucosamine reductase (299 aa).

Residues 28–193 form the FAD-binding PCMH-type domain; it reads KVGGPADILA…LSAKFELQAG (166 aa). Residue arginine 172 is part of the active site. Serine 222 (proton donor) is an active-site residue. Residue glutamate 292 is part of the active site.

It depends on FAD as a cofactor.

Its subcellular location is the cytoplasm. The enzyme catalyses UDP-N-acetyl-alpha-D-muramate + NADP(+) = UDP-N-acetyl-3-O-(1-carboxyvinyl)-alpha-D-glucosamine + NADPH + H(+). It functions in the pathway cell wall biogenesis; peptidoglycan biosynthesis. Functionally, cell wall formation. The sequence is that of UDP-N-acetylenolpyruvoylglucosamine reductase from Lactococcus lactis subsp. cremoris (strain MG1363).